The primary structure comprises 461 residues: MTTAKSGTTIEIIGAVVDVEFPRHAVPKVYDALQVDENNLTLEVQQQLGDGVVRTIAMGSTEGLKRDIAVKNTEKPIEVPVGKETLGRIMNVLGEPIDELGPINSKEKLPIHRPAPSFIEQSGTTELLETGIKVVDLLCPFAKGGKVGLFGGAGVGKTVNMMELIRNIAIEHSGYSVFAGVGERTREGNDFYHEMKESNVLDKVALVYGQMNEPPGNRLRVGLTGLTLAEAFRDEGRDVLLFIDNIFRYTLAGVEVSALLGRMPSAVGYQPTLAEEMGALQERITSTKKGSITSIQAVYVPADDLTDPSPATTFAHLDATVVLSRQIAERGIYPAIDPLDSTSRQLDPLIIGEEHYRVARGVQETLQRYEELKDIIAILGMDELSEDDKRAVRRARKIQRFLSQPFFVAEVFTGAPGKYVSLQDTIRGFKGIINGEYDELPEQAFYMVGSIEEAVEKAKSL.

151–158 (GGAGVGKT) contributes to the ATP binding site.

This sequence belongs to the ATPase alpha/beta chains family. In terms of assembly, F-type ATPases have 2 components, CF(1) - the catalytic core - and CF(0) - the membrane proton channel. CF(1) has five subunits: alpha(3), beta(3), gamma(1), delta(1), epsilon(1). CF(0) has three main subunits: a(1), b(2) and c(9-12). The alpha and beta chains form an alternating ring which encloses part of the gamma chain. CF(1) is attached to CF(0) by a central stalk formed by the gamma and epsilon chains, while a peripheral stalk is formed by the delta and b chains.

The protein resides in the cell inner membrane. It carries out the reaction ATP + H2O + 4 H(+)(in) = ADP + phosphate + 5 H(+)(out). Produces ATP from ADP in the presence of a proton gradient across the membrane. The catalytic sites are hosted primarily by the beta subunits. This is ATP synthase subunit beta from Coxiella burnetii (strain RSA 331 / Henzerling II).